The chain runs to 351 residues: Methionine import ATP-binding protein MetN (351 aa).

The ABC transporter domain occupies 2 to 241 (IVTEALTKAF…PQHAVTRAFV (240 aa)). Residue 38–45 (GRSGAGKS) participates in ATP binding.

This sequence belongs to the ABC transporter superfamily. Methionine importer (TC 3.A.1.24) family. The complex is composed of two ATP-binding proteins (MetN), two transmembrane proteins (MetI) and a solute-binding protein (MetQ).

The protein resides in the cell inner membrane. The enzyme catalyses L-methionine(out) + ATP + H2O = L-methionine(in) + ADP + phosphate + H(+). It catalyses the reaction D-methionine(out) + ATP + H2O = D-methionine(in) + ADP + phosphate + H(+). Part of the ABC transporter complex MetNIQ involved in methionine import. Responsible for energy coupling to the transport system. This Rhodospirillum rubrum (strain ATCC 11170 / ATH 1.1.1 / DSM 467 / LMG 4362 / NCIMB 8255 / S1) protein is Methionine import ATP-binding protein MetN.